The sequence spans 88 residues: MIERYFVTEIGKIWSDENKYNTWAKVELLVCEGWAQIGLIPPTDIEKIKTNLTVNLPRMLELEAETKHDVVAFTRMLSETLGPEKKWI.

N(6)-(1,2-dicarboxyethyl)-AMP is bound by residues 4 to 5 (RY) and 67 to 69 (KHD).

This sequence belongs to the lyase 1 family. Adenylosuccinate lyase subfamily. Homotetramer and homodimer. Residues from neighboring subunits contribute catalytic and substrate-binding residues to each active site.

The catalysed reaction is N(6)-(1,2-dicarboxyethyl)-AMP = fumarate + AMP. It catalyses the reaction (2S)-2-[5-amino-1-(5-phospho-beta-D-ribosyl)imidazole-4-carboxamido]succinate = 5-amino-1-(5-phospho-beta-D-ribosyl)imidazole-4-carboxamide + fumarate. Its pathway is purine metabolism; AMP biosynthesis via de novo pathway; AMP from IMP: step 2/2. It functions in the pathway purine metabolism; IMP biosynthesis via de novo pathway; 5-amino-1-(5-phospho-D-ribosyl)imidazole-4-carboxamide from 5-amino-1-(5-phospho-D-ribosyl)imidazole-4-carboxylate: step 2/2. In terms of biological role, catalyzes two reactions in de novo purine nucleotide biosynthesis. Catalyzes the breakdown of 5-aminoimidazole- (N-succinylocarboxamide) ribotide (SAICAR or 2-[5-amino-1-(5-phospho-beta-D-ribosyl)imidazole-4-carboxamido]succinate) to 5-aminoimidazole-4-carboxamide ribotide (AICAR or 5-amino-1-(5-phospho-beta-D-ribosyl)imidazole-4-carboxamide) and fumarate, and of adenylosuccinate (ADS or N(6)-(1,2-dicarboxyethyl)-AMP) to adenosine monophosphate (AMP) and fumarate. This chain is Adenylosuccinate lyase (purB), found in Spiroplasma citri.